A 364-amino-acid chain; its full sequence is Mitogen-activated protein kinase 11 (364 aa).

A Protein kinase domain is found at L24 to F308. ATP is bound by residues V30–V38 and K53. Nilotinib is bound at residue E71. Catalysis depends on D168, which acts as the Proton acceptor. Position 180 is a phosphothreonine; by MAP2K3, MAP2K4 and MAP2K6 (T180). Residues T180–Y182 carry the TXY motif. Position 182 is a phosphotyrosine; by MAP2K3, MAP2K4 and MAP2K6 (Y182). The tract at residues H312–E331 is disordered. Acidic residues predominate over residues P314–S326. Y323 carries the post-translational modification Phosphotyrosine; by ZAP70.

Belongs to the protein kinase superfamily. CMGC Ser/Thr protein kinase family. MAP kinase subfamily. As to quaternary structure, interacts with HDAC3 and DUSP16. The cofactor is Mg(2+). Dually phosphorylated on Thr-180 and Tyr-182 by MAP2K3/MKK3, MAP2K4/MKK4 and MAP2K6/MKK6, which activates the enzyme.

Its subcellular location is the cytoplasm. The protein resides in the nucleus. It carries out the reaction L-seryl-[protein] + ATP = O-phospho-L-seryl-[protein] + ADP + H(+). It catalyses the reaction L-threonyl-[protein] + ATP = O-phospho-L-threonyl-[protein] + ADP + H(+). With respect to regulation, activated by phosphorylation on threonine and tyrosine by MAP2K3/MKK3, MAP2K4/MKK4 and MAP2K6/MKK6. MAP2K3/MKK3 and MAP2K6/MKK6 are both essential for the activation of MAPK11 induced by environmental stress. HDAC3 interacts directly and selectively with MAPK11 to repress ATF2 transcriptional activity, and regulate TNF gene expression in LPS-stimulated cells. Inhibited by SB203580 and pyridinyl-imidazole related compounds. Serine/threonine kinase which acts as an essential component of the MAP kinase signal transduction pathway. MAPK11 is one of the four p38 MAPKs which play an important role in the cascades of cellular responses evoked by extracellular stimuli such as pro-inflammatory cytokines or physical stress leading to direct activation of transcription factors. Accordingly, p38 MAPKs phosphorylate a broad range of proteins and it has been estimated that they may have approximately 200 to 300 substrates each. MAPK11 functions are mostly redundant with those of MAPK14. Some of the targets are downstream kinases which are activated through phosphorylation and further phosphorylate additional targets. RPS6KA5/MSK1 and RPS6KA4/MSK2 can directly phosphorylate and activate transcription factors such as CREB1, ATF1, the NF-kappa-B isoform RELA/NFKB3, STAT1 and STAT3, but can also phosphorylate histone H3 and the nucleosomal protein HMGN1. RPS6KA5/MSK1 and RPS6KA4/MSK2 play important roles in the rapid induction of immediate-early genes in response to stress or mitogenic stimuli, either by inducing chromatin remodeling or by recruiting the transcription machinery. On the other hand, two other kinase targets, MAPKAPK2/MK2 and MAPKAPK3/MK3, participate in the control of gene expression mostly at the post-transcriptional level, by phosphorylating ZFP36 (tristetraprolin) and ELAVL1, and by regulating EEF2K, which is important for the elongation of mRNA during translation. MKNK1/MNK1 and MKNK2/MNK2, two other kinases activated by p38 MAPKs, regulate protein synthesis by phosphorylating the initiation factor EIF4E2. In the cytoplasm, the p38 MAPK pathway is an important regulator of protein turnover. For example, CFLAR is an inhibitor of TNF-induced apoptosis whose proteasome-mediated degradation is regulated by p38 MAPK phosphorylation. Ectodomain shedding of transmembrane proteins is regulated by p38 MAPKs as well. In response to inflammatory stimuli, p38 MAPKs phosphorylate the membrane-associated metalloprotease ADAM17. Such phosphorylation is required for ADAM17-mediated ectodomain shedding of TGF-alpha family ligands, which results in the activation of EGFR signaling and cell proliferation. Additional examples of p38 MAPK substrates are the FGFR1. FGFR1 can be translocated from the extracellular space into the cytosol and nucleus of target cells, and regulates processes such as rRNA synthesis and cell growth. FGFR1 translocation requires p38 MAPK activation. In the nucleus, many transcription factors are phosphorylated and activated by p38 MAPKs in response to different stimuli. Classical examples include ATF1, ATF2, ATF6, ELK1, PTPRH, DDIT3, TP53/p53 and MEF2C and MEF2A. The p38 MAPKs are emerging as important modulators of gene expression by regulating chromatin modifiers and remodelers. The promoters of several genes involved in the inflammatory response, such as IL6, IL8 and IL12B, display a p38 MAPK-dependent enrichment of histone H3 phosphorylation on 'Ser-10' (H3S10ph) in LPS-stimulated myeloid cells. This phosphorylation enhances the accessibility of the cryptic NF-kappa-B-binding sites marking promoters for increased NF-kappa-B recruitment. Phosphorylates methyltransferase DOT1L on 'Ser-834', 'Thr-900', 'Ser-902', 'Thr-984', 'Ser-1001', 'Ser-1009' and 'Ser-1104'. This is Mitogen-activated protein kinase 11 (Mapk11) from Mus musculus (Mouse).